A 320-amino-acid polypeptide reads, in one-letter code: 1-aminocyclopropane-1-carboxylate oxidase 3 (320 aa).

The stretch at 111–131 forms a coiled coil; that stretch reads NEYRLAMKDFGKRLEILAEEL. The Fe2OG dioxygenase domain maps to 155–256; it reads GPTFATKLSN…RMSIASFYNP (102 aa). The Fe cation site is built by histidine 180, aspartate 182, and histidine 237. A 2-oxoglutarate-binding site is contributed by arginine 247.

Belongs to the iron/ascorbate-dependent oxidoreductase family. Fe(2+) serves as cofactor.

It carries out the reaction 1-aminocyclopropane-1-carboxylate + L-ascorbate + O2 = ethene + L-dehydroascorbate + hydrogen cyanide + CO2 + 2 H2O. The protein operates within alkene biosynthesis; ethylene biosynthesis via S-adenosyl-L-methionine; ethylene from S-adenosyl-L-methionine: step 2/2. In terms of biological role, enzyme involved in the ethylene biosynthesis. May promote stem elongation by maximizing the extensibility cells, possibly by activating ethylene biosynthesis, in response to very-long-chain fatty acids (VLCFAs C20:0 to C30:0). This chain is 1-aminocyclopropane-1-carboxylate oxidase 3, found in Arabidopsis thaliana (Mouse-ear cress).